Reading from the N-terminus, the 72-residue chain is Putative membrane protein insertion efficiency factor (72 aa).

Belongs to the UPF0161 family.

It localises to the cell inner membrane. Functionally, could be involved in insertion of integral membrane proteins into the membrane. The polypeptide is Putative membrane protein insertion efficiency factor (Trichodesmium erythraeum (strain IMS101)).